The primary structure comprises 224 residues: V-type proton ATPase subunit S1-like protein (224 aa).

Residues 147 to 167 (PAFLIGLAMSLILLLVLAYAL) form a helical membrane-spanning segment.

This sequence belongs to the vacuolar ATPase subunit S1 family.

Its subcellular location is the membrane. This chain is V-type proton ATPase subunit S1-like protein (ATP6AP1L), found in Homo sapiens (Human).